A 90-amino-acid chain; its full sequence is MSQISQTALASLDESSRKDIMQFIESENSKSKVQMSIHNFTDMCFKKCNANKPITSGTLDSSEEQCLTNCLNRFLDTNIKVVQALQGAQK.

Positions Cys44–Cys70 match the Twin CX3C motif motif. Intrachain disulfides connect Cys44/Cys70 and Cys48/Cys66.

Belongs to the small Tim family. In terms of assembly, heterohexamer; composed of 3 copies of TIM8 and 3 copies of TIM13, named soluble 70 kDa complex. Associates with the TIM22 complex, whose core is composed of TIM22 and TIM54. Interacts with the transmembrane regions of multi-pass transmembrane proteins in transit.

Its subcellular location is the mitochondrion inner membrane. Mitochondrial intermembrane chaperone that participates in the import and insertion of some multi-pass transmembrane proteins into the mitochondrial inner membrane. Also required for the transfer of beta-barrel precursors from the TOM complex to the sorting and assembly machinery (SAM complex) of the outer membrane. Acts as a chaperone-like protein that protects the hydrophobic precursors from aggregation and guide them through the mitochondrial intermembrane space. The TIM8-TIM13 complex is non essential and only mediates the import of few proteins, while the predominant TIM9-TIM10 70 kDa complex is crucial and mediates the import of much more proteins. In Debaryomyces hansenii (strain ATCC 36239 / CBS 767 / BCRC 21394 / JCM 1990 / NBRC 0083 / IGC 2968) (Yeast), this protein is Mitochondrial import inner membrane translocase subunit TIM8 (TIM8).